Consider the following 562-residue polypeptide: uncharacterized protein (562 aa).

5 helical membrane-spanning segments follow: residues 15–34 (WGGGVAHSVLILSLVIAFGI), 41–63 (VAGISLGVTWILFVGIVFGHFNL), 78–97 (LILFVYSIGLQVGPGFFSAF), 104–126 (LNMLAMIVVFAGVIITLALHFIT), and 165–187 (IALGYAVAYPLGVVGCIMSLLGL). RCK C-terminal domains follow at residues 204–286 (QGLG…ITAF) and 289–374 (KPIE…VLGN). 6 consecutive transmembrane segments (helical) span residues 384-403 (LIPIFLGIALGCILGSIPFM), 413-430 (LGLAGGPLIVSILISRFG), 450-472 (IGISLFLACVGLGAGDGFVETII), 476-498 (GYVWIAYGMIITIVPLLLAGFIG), 505-524 (NYYTLIGVLAGSTTNPPALA), and 539-561 (YATVYPLTMFLRVLTAQLLILSL).

This sequence belongs to the AAE transporter (TC 2.A.81) family.

The protein localises to the cell membrane. This is an uncharacterized protein from Bacteroides fragilis (strain YCH46).